The chain runs to 170 residues: Neurotensin/neuromedin N (170 aa).

Positions 1 to 23 are cleaved as a signal peptide; that stretch reads MMAGMKIQLVCMILLAFSSWSLC.

This sequence belongs to the neurotensin family. Interacts with NTSR1. Interacts with SORT1. Interacts with SORL1. In terms of processing, neurotensin is cleaved and degraded by Angiotensin-converting enzyme (ACE) and neprilysin (MME). Brain and gut.

The protein resides in the secreted. The protein localises to the cytoplasmic vesicle. It is found in the secretory vesicle. Functionally, neurotensin may play an endocrine or paracrine role in the regulation of fat metabolism. It causes contraction of smooth muscle. In Bos taurus (Bovine), this protein is Neurotensin/neuromedin N (NTS).